The sequence spans 503 residues: Guanosine-5'-triphosphate,3'-diphosphate pyrophosphatase (503 aa).

The protein belongs to the GppA/Ppx family. GppA subfamily.

The catalysed reaction is guanosine 3'-diphosphate 5'-triphosphate + H2O = guanosine 3',5'-bis(diphosphate) + phosphate + H(+). Its pathway is purine metabolism; ppGpp biosynthesis; ppGpp from GTP: step 2/2. Catalyzes the conversion of pppGpp to ppGpp. Guanosine pentaphosphate (pppGpp) is a cytoplasmic signaling molecule which together with ppGpp controls the 'stringent response', an adaptive process that allows bacteria to respond to amino acid starvation, resulting in the coordinated regulation of numerous cellular activities. In Pseudoalteromonas atlantica (strain T6c / ATCC BAA-1087), this protein is Guanosine-5'-triphosphate,3'-diphosphate pyrophosphatase.